A 624-amino-acid chain; its full sequence is LEAF RUST 10 DISEASE-RESISTANCE LOCUS RECEPTOR-LIKE PROTEIN KINASE-like 2.2 (624 aa).

The signal sequence occupies residues 1 to 30 (MDYLSSMGSQTARFCLILLFLFYYLPCALS). At 31–263 (QDDLWGCGTP…IPNTRSILIT (233 aa)) the chain is on the extracellular side. Asn-45, Asn-75, Asn-85, Asn-95, Asn-150, and Asn-164 each carry an N-linked (GlcNAc...) asparagine glycan. The helical transmembrane segment at 264 to 284 (IGQVVGFHVFIIVVMIIAFLF) threads the bilayer. The Cytoplasmic portion of the chain corresponds to 285 to 624 (WRRKKVNDLR…EEDSSIYSEV (340 aa)). Positions 317–599 (KSFTEVVGRG…SLDPPPKPLL (283 aa)) constitute a Protein kinase domain. Residues 323–331 (VGRGGFGTV) and Lys-345 contribute to the ATP site. Asp-434 functions as the Proton acceptor in the catalytic mechanism. A disordered region spans residues 587–624 (NLDSLDPPPKPLLHMPMQNNNAESSQPSEEDSSIYSEV). The segment covering 603–624 (MQNNNAESSQPSEEDSSIYSEV) has biased composition (polar residues).

Belongs to the protein kinase superfamily. Ser/Thr protein kinase family.

It localises to the membrane. It catalyses the reaction L-seryl-[protein] + ATP = O-phospho-L-seryl-[protein] + ADP + H(+). The enzyme catalyses L-threonyl-[protein] + ATP = O-phospho-L-threonyl-[protein] + ADP + H(+). This is LEAF RUST 10 DISEASE-RESISTANCE LOCUS RECEPTOR-LIKE PROTEIN KINASE-like 2.2 from Arabidopsis thaliana (Mouse-ear cress).